The chain runs to 426 residues: Proline--tRNA ligase (426 aa).

Belongs to the class-II aminoacyl-tRNA synthetase family. ProS type 2 subfamily. In terms of assembly, homodimer.

It localises to the cytoplasm. The catalysed reaction is tRNA(Pro) + L-proline + ATP = L-prolyl-tRNA(Pro) + AMP + diphosphate. In terms of biological role, catalyzes the attachment of proline to tRNA(Pro) in a two-step reaction: proline is first activated by ATP to form Pro-AMP and then transferred to the acceptor end of tRNA(Pro). The polypeptide is Proline--tRNA ligase (Anaplasma phagocytophilum (strain HZ)).